The sequence spans 270 residues: MKPKMKYSTNKISTAKWKNTASKALCFKLGKSQQKAKEVCPMYFMKLRSGLMIKKEACYFRRETTKRPSLKTGRKHKRHLVLAACQQQSTVECFAFGISGVQKYTRALHDSSITGISPITEYLASLSTYNDQSITFALEDESYEIYVEDLKKDEKKDKVLLSYYESQHPSNESGDGVDGKMLMVTLSPTKDFWLHANNKEHSVELHKCEKPLPDQAFFVLHNMHSNCVSFECKTDPGVFIGVKDNHLALIKVDSSENLCTENILFKLSET.

Residues 1–65 form a homeodomain-like HTH domain region; the sequence is MKPKMKYSTN…EACYFRRETT (65 aa). A propeptide spanning residues 1–94 is cleaved from the precursor; the sequence is MKPKMKYSTN…CQQQSTVECF (94 aa). The tract at residues 64-111 is interaction with RELA; the sequence is TTKRPSLKTGRKHKRHLVLAACQQQSTVECFAFGISGVQKYTRALHDS.

This sequence belongs to the IL-1 family. Highly divergent. In terms of assembly, forms a 1:1:1 heterotrimeric complex with its primary high-affinity receptor IL1RL1 and the coreceptor IL1RAP. Interacts with cargo receptor TMED10; the interaction mediates the translocation from the cytoplasm into the ERGIC (endoplasmic reticulum-Golgi intermediate compartment) and thereby secretion. (Microbial infection) Interacts (in reduced form) with H.polygyrus ARI. Post-translationally, the full-length protein can be released from cells and is able to signal via the IL1RL1/ST2 receptor. However, proteolytic processing by CELA1, CSTG/cathepsin G and ELANE/neutrophil elastase produces C-terminal peptides that are more active than the unprocessed full length protein. May also be proteolytically processed by calpains. Proteolytic cleavage mediated by apoptotic caspases including CASP3 and CASP7 results in IL33 inactivation. In vitro proteolytic cleavage by CASP1 was reported but could not be confirmed in vivo suggesting that IL33 is probably not a direct substrate for that caspase. In terms of tissue distribution, expressed at high level in high endothelial venules found in tonsils, Peyer patches and mesenteric lymph nodes. Almost undetectable in placenta.

The protein resides in the nucleus. It localises to the chromosome. Its subcellular location is the cytoplasm. It is found in the cytoplasmic vesicle. The protein localises to the secretory vesicle. The protein resides in the secreted. Its function is as follows. Cytokine that binds to and signals through the IL1RL1/ST2 receptor which in turn activates NF-kappa-B and MAPK signaling pathways in target cells. Involved in the maturation of Th2 cells inducing the secretion of T-helper type 2-associated cytokines. Also involved in activation of mast cells, basophils, eosinophils and natural killer cells. Acts as an enhancer of polarization of alternatively activated macrophages. Acts as a chemoattractant for Th2 cells, and may function as an 'alarmin', that amplifies immune responses during tissue injury. Induces rapid UCP2-dependent mitochondrial rewiring that attenuates the generation of reactive oxygen species and preserves the integrity of Krebs cycle required for persistent production of itaconate and subsequent GATA3-dependent differentiation of inflammation-resolving alternatively activated macrophages. In quiescent endothelia the uncleaved form is constitutively and abundantly expressed, and acts as a chromatin-associated nuclear factor with transcriptional repressor properties, it may sequester nuclear NF-kappaB/RELA, lowering expression of its targets. This form is rapidely lost upon angiogenic or pro-inflammatory activation. The protein is Interleukin-33 of Homo sapiens (Human).